Here is a 206-residue protein sequence, read N- to C-terminus: Superoxide dismutase [Mn] (206 aa).

Mn(2+) is bound by residues histidine 27, histidine 82, aspartate 168, and histidine 172.

The protein belongs to the iron/manganese superoxide dismutase family. As to quaternary structure, homodimer. The cofactor is Mn(2+).

It carries out the reaction 2 superoxide + 2 H(+) = H2O2 + O2. Destroys superoxide anion radicals which are normally produced within the cells and which are toxic to biological systems. This chain is Superoxide dismutase [Mn] (sodA), found in Escherichia coli O157:H7.